Reading from the N-terminus, the 255-residue chain is Type III pantothenate kinase (255 aa).

ATP is bound at residue 6–13 (DVGNSYTM). 107–110 (GADR) contacts substrate. The Proton acceptor role is filled by D109. K(+) is bound at residue D129. T132 is a binding site for ATP. T183 lines the substrate pocket.

This sequence belongs to the type III pantothenate kinase family. As to quaternary structure, homodimer. Requires NH4(+) as cofactor. The cofactor is K(+).

It is found in the cytoplasm. The enzyme catalyses (R)-pantothenate + ATP = (R)-4'-phosphopantothenate + ADP + H(+). It participates in cofactor biosynthesis; coenzyme A biosynthesis; CoA from (R)-pantothenate: step 1/5. Functionally, catalyzes the phosphorylation of pantothenate (Pan), the first step in CoA biosynthesis. The chain is Type III pantothenate kinase from Petrotoga mobilis (strain DSM 10674 / SJ95).